The following is a 380-amino-acid chain: Ceramide synthase 2 (380 aa).

Topologically, residues 1-40 (MLQTLYDYFWWERLWLPVNLTWADLEDKDGRVYAKASDLY) are lumenal. Asn-19 is a glycosylation site (N-linked (GlcNAc...) asparagine). Residues 41–61 (ITLPLALLFLVIRYFFELYVA) traverse the membrane as a helical segment. The interval 67–128 (LLNVKEKTRL…RRRRNQDRPS (62 aa)) is homeobox-like. Residues 131–332 (KKFREASWRF…ILRMAHKFIT (202 aa)) enclose the TLC domain. 4 consecutive transmembrane segments (helical) span residues 140–160 (FTYY…KPWF), 175–195 (IIPS…SLLF), 209–229 (QIIH…ANYV), and 264–284 (LFIV…PFWI). A Last loop motif motif is present at residues 291 to 300 (YPLELYPAFF). A helical transmembrane segment spans residues 304–324 (FFNFMMAVLQMLHIFWAYFIL). The Cytoplasmic segment spans residues 325-380 (RMAHKFITGKLIEDERSDREETESSEGEETAAGAGAKSRLLANGHPILNNNHPKND). Positions 340–380 (RSDREETESSEGEETAAGAGAKSRLLANGHPILNNNHPKND) are disordered. A Phosphoserine modification is found at Ser-341. Residues 344-353 (EETESSEGEE) show a composition bias toward acidic residues. At Thr-346 the chain carries Phosphothreonine. Ser-348 and Ser-349 each carry phosphoserine.

As to quaternary structure, interacts with ATP6V0C, ASGR1, ASGR2 and SLC22A1/OCT1. Interacts with ELOV1, HSD17B12 and TECR. Interacts with NDUFS2. Interacts with PAQR4; the interaction regulates the stability and activity of CERS2 and is inhibited in presence of ceramides. Post-translationally, acetylated. Deacetylation by SIRT3 increases enzyme activity and promotes mitochondrial ceramide accumulation. Phosphorylated at the C-terminus by CK2, leading to increase the ceramide synthase activity. Broadly expressed, with highest levels in liver and kidney. In brain is detected in neurons, oligodentrocytes, ependymal cells and epithelial cells of the choroid plexus. In kidney is detected in collecting ducts and to a lesser degree in proximal tubules.

The protein localises to the endoplasmic reticulum membrane. The catalysed reaction is a very long-chain fatty acyl-CoA + a sphingoid base = an N-(very-long-chain fatty acyl)-sphingoid base + CoA + H(+). The enzyme catalyses docosanoyl-CoA + sphinganine = N-docosanoylsphinganine + CoA + H(+). It carries out the reaction tetracosanoyl-CoA + sphinganine = N-tetracosanoylsphinganine + CoA + H(+). It catalyses the reaction hexacosanoyl-CoA + sphinganine = N-hexacosanoylsphinganine + CoA + H(+). The catalysed reaction is (15Z)-tetracosenoyl-CoA + sphinganine = N-(15Z-tetracosenoyl)-sphinganine + CoA + H(+). The enzyme catalyses 2-hydroxytetracosanoyl-CoA + sphinganine = N-(2-hydroxytetracosanoyl)-sphinganine + CoA + H(+). It carries out the reaction 2-hydroxydocosanoyl-CoA + sphinganine = N-(2-hydroxydocosanoyl)-sphinganine + CoA + H(+). It catalyses the reaction 2-hydroxytetracosenoyl-CoA + sphinganine = N-(2-hydroxytetracosenoyl)-sphinganine + CoA + H(+). The catalysed reaction is tetracosenoyl-CoA + sphinganine = an N-tetracosenoylsphinganine + CoA + H(+). The enzyme catalyses hexacosenoyl-CoA + sphinganine = N-hexacosenoylsphinganine + CoA + H(+). It carries out the reaction tetracosanoyl-CoA + sphing-4-enine = N-tetracosanoyl-sphing-4-enine + CoA + H(+). It catalyses the reaction tetracosenoyl-CoA + sphing-4-enine = N-(tetracosenoyl)-sphing-4-enine + CoA + H(+). The catalysed reaction is heptadecasphing-4-enine + tetracosanoyl-CoA = N-tetracosanoyl-heptadecasphing-4-enine + CoA + H(+). The enzyme catalyses a fatty acyl-CoA + sphing-4-enine = an N-acylsphing-4-enine + CoA + H(+). It carries out the reaction sphing-4-enine + hexadecanoyl-CoA = N-hexadecanoylsphing-4-enine + CoA + H(+). It catalyses the reaction sphing-4-enine + octadecanoyl-CoA = N-octadecanoylsphing-4-enine + CoA + H(+). The catalysed reaction is eicosanoyl-CoA + sphing-4-enine = N-eicosanoyl-sphing-4-enine + CoA + H(+). The enzyme catalyses sphinganine + hexadecanoyl-CoA = N-hexadecanoylsphinganine + CoA + H(+). It carries out the reaction sphinganine + octadecanoyl-CoA = N-(octadecanoyl)-sphinganine + CoA + H(+). It catalyses the reaction sphinganine + (9Z)-octadecenoyl-CoA = N-(9Z-octadecenoyl)-sphinganine + CoA + H(+). The catalysed reaction is eicosanoyl-CoA + sphinganine = N-eicosanoylsphinganine + CoA + H(+). Its pathway is lipid metabolism; sphingolipid metabolism. Its activity is regulated as follows. Ceramide synthase activity is inhibited by sphingosine-1-phosphate. In terms of biological role, ceramide synthase that catalyzes the transfer of the acyl chain from acyl-CoA to a sphingoid base, with high selectivity toward very-long-chain fatty acyl-CoA (chain length C22-C27). N-acylates sphinganine and sphingosine bases to form dihydroceramides and ceramides in de novo synthesis and salvage pathways, respectively. Plays a non-redundant role in the synthesis of ceramides with very-long-chain fatty acids in kidney, liver and brain. Regulates the abundance of myelin-specific sphingolipids galactosylceramide and sulfatide that affects myelin sheath architecture and motor neuron functions. The polypeptide is Ceramide synthase 2 (Mus musculus (Mouse)).